We begin with the raw amino-acid sequence, 449 residues long: N-succinylarginine dihydrolase (449 aa).

Substrate-binding positions include 19–28 (GGLSYGNVAS), Asn110, and 137–138 (HR). The tract at residues 23–43 (YGNVASQSNSQQASNPREAAR) is disordered. A compositionally biased stretch (low complexity) spans 27-37 (ASQSNSQQASN). Glu174 is a catalytic residue. Arg214 serves as a coordination point for substrate. His250 is an active-site residue. 2 residues coordinate substrate: Asp252 and Asn365. The active-site Nucleophile is the Cys371.

Belongs to the succinylarginine dihydrolase family. As to quaternary structure, homodimer.

It carries out the reaction N(2)-succinyl-L-arginine + 2 H2O + 2 H(+) = N(2)-succinyl-L-ornithine + 2 NH4(+) + CO2. Its pathway is amino-acid degradation; L-arginine degradation via AST pathway; L-glutamate and succinate from L-arginine: step 2/5. In terms of biological role, catalyzes the hydrolysis of N(2)-succinylarginine into N(2)-succinylornithine, ammonia and CO(2). This chain is N-succinylarginine dihydrolase, found in Pseudomonas putida (strain ATCC 47054 / DSM 6125 / CFBP 8728 / NCIMB 11950 / KT2440).